The chain runs to 410 residues: MNQQLNNLTLPIYMDYQATTPLDPRVMEAMLPYFTTKFGNPHSRSHSFGWEAERAVEEARSRVARLIGADTKEIIFTSGATESNNLAIKGVAKFYGNKKNHIITVVSEHKCVLDACRYLEQEGINITYLPVKPNGIIALETLKNAITDQTMLVSVMAVNNEIGVVQPLKEIGKICRARGVFFHSDIAQGFGKIPIDVNEFNIDLASISGHKIYGPKGIGGLYVRKKPRVRVTPLINGGGQERGMRSGTLPTPLIVGLGVAAEIAYSEMEKDTKHVNYLFDRFLNNIHSRISEVYLNGAKDPRYKGNLNLSFAGVEGESIILAIKDLAVSSGSACTSASLEPSYVLRSMGIGEELAHTSIRFGIGRFTTEQEIDYAVNLICSKIDKLRKLSPLWEMMQEGIDLKKIKWAVH.

Pyridoxal 5'-phosphate contacts are provided by residues 80–81 (AT), Asn160, Gln188, and 208–210 (SGH). An N6-(pyridoxal phosphate)lysine modification is found at Lys211. Position 248 (Thr248) interacts with pyridoxal 5'-phosphate. The Cysteine persulfide intermediate role is filled by Cys334. Cys334 lines the [2Fe-2S] cluster pocket.

The protein belongs to the class-V pyridoxal-phosphate-dependent aminotransferase family. NifS/IscS subfamily. In terms of assembly, homodimer. Forms a heterotetramer with IscU, interacts with other sulfur acceptors. Requires pyridoxal 5'-phosphate as cofactor.

It is found in the cytoplasm. The catalysed reaction is (sulfur carrier)-H + L-cysteine = (sulfur carrier)-SH + L-alanine. It participates in cofactor biosynthesis; iron-sulfur cluster biosynthesis. Master enzyme that delivers sulfur to a number of partners involved in Fe-S cluster assembly, tRNA modification or cofactor biosynthesis. Catalyzes the removal of elemental sulfur atoms from cysteine to produce alanine. Functions as a sulfur delivery protein for Fe-S cluster synthesis onto IscU, an Fe-S scaffold assembly protein, as well as other S acceptor proteins. The chain is Cysteine desulfurase IscS from Rickettsia akari (strain Hartford).